The sequence spans 349 residues: Green-sensitive opsin-3 (349 aa).

Topologically, residues 1-36 (MNGTEGNNFYIPMSNRTGLVRSPYEYPQYYLAEPWQ) are extracellular. N-linked (GlcNAc...) asparagine glycosylation is found at asparagine 2 and asparagine 15. The helical transmembrane segment at 37-61 (FKLLAVYMFFLMCFGFPINGLTLVV) threads the bilayer. Residues 62–73 (TAQHKKLRQPLN) are Cytoplasmic-facing. Residues 74 to 99 (FILVNLAVAGTIMVCFGFTVTFYTAI) form a helical membrane-spanning segment. The Extracellular segment spans residues 100 to 113 (NGYFVLGPTGCAIE). Cysteines 110 and 187 form a disulfide. A helical transmembrane segment spans residues 114–133 (GFMATLGGQISLWSLVVLAI). Topologically, residues 134 to 152 (ERYIVVCKPMGSFKFSSNH) are cytoplasmic. The helical transmembrane segment at 153–176 (AFAGIGFTWIMALSCAAPPLVGWS) threads the bilayer. Topologically, residues 177–202 (RYIPEGMQCSCGPDYYTLNPDYNNES) are extracellular. The N-linked (GlcNAc...) asparagine glycan is linked to asparagine 200. The chain crosses the membrane as a helical span at residues 203 to 230 (YVLYMFCCHFIFPVTTIFFTYGRLVCTV). The Cytoplasmic segment spans residues 231 to 252 (KAAAAQQQESESTQKAEREVTR). Residues 253 to 276 (MVILMVLGFLVAWTPYASVAAWIF) traverse the membrane as a helical segment. Over 277–284 (FNRGAAFS) the chain is Extracellular. Residues 285-309 (AQFMAVPAFFSKSSSIFNPIIYVLL) form a helical membrane-spanning segment. Lysine 296 carries the N6-(retinylidene)lysine modification. At 310 to 349 (NKQFRNCMLTTLFCGKNPLGDDESSTVSTSKTEVSSVSPA) the chain is on the cytoplasmic side. The segment at 329–349 (GDDESSTVSTSKTEVSSVSPA) is disordered. Over residues 334–349 (STVSTSKTEVSSVSPA) the composition is skewed to low complexity.

It belongs to the G-protein coupled receptor 1 family. Opsin subfamily. Phosphorylated on some or all of the serine and threonine residues present in the C-terminal region.

It is found in the membrane. Visual pigments are the light-absorbing molecules that mediate vision. They consist of an apoprotein, opsin, covalently linked to cis-retinal. The protein is Green-sensitive opsin-3 (opn1mw3) of Danio rerio (Zebrafish).